A 32-amino-acid polypeptide reads, in one-letter code: Cytochrome b6-f complex subunit 7 (32 aa).

The helical transmembrane segment at 9-27 (AALFWVLIPLGLAGGALLL) threads the bilayer.

Belongs to the PetM family. In terms of assembly, the 4 large subunits of the cytochrome b6-f complex are cytochrome b6, subunit IV (17 kDa polypeptide, PetD), cytochrome f and the Rieske protein, while the 4 small subunits are PetG, PetL, PetM and PetN. The complex functions as a dimer.

The protein localises to the cellular thylakoid membrane. Its function is as follows. Component of the cytochrome b6-f complex, which mediates electron transfer between photosystem II (PSII) and photosystem I (PSI), cyclic electron flow around PSI, and state transitions. This Synechococcus sp. (strain RCC307) protein is Cytochrome b6-f complex subunit 7.